A 286-amino-acid chain; its full sequence is uncharacterized protein (286 aa).

Disordered regions lie at residues 59-89 and 225-286; these read PESA…PGAK and RQRK…EDTR. The span at 69 to 85 shows a compositional bias: low complexity; it reads AEAESAGTAAATESHGA.

This is an uncharacterized protein from Mus musculus (Mouse).